The following is a 222-amino-acid chain: 3-dehydroquinate dehydratase (222 aa).

3-dehydroquinate contacts are provided by residues 29-31 (ELR) and R55. H112 acts as the Proton donor/acceptor in catalysis. The active-site Schiff-base intermediate with substrate is the K139. The 3-dehydroquinate site is built by R178, S199, and Q203.

The protein belongs to the type-I 3-dehydroquinase family. As to quaternary structure, homodimer.

The enzyme catalyses 3-dehydroquinate = 3-dehydroshikimate + H2O. Its pathway is metabolic intermediate biosynthesis; chorismate biosynthesis; chorismate from D-erythrose 4-phosphate and phosphoenolpyruvate: step 3/7. In terms of biological role, involved in the third step of the chorismate pathway, which leads to the biosynthesis of aromatic amino acids. Catalyzes the cis-dehydration of 3-dehydroquinate (DHQ) and introduces the first double bond of the aromatic ring to yield 3-dehydroshikimate. This chain is 3-dehydroquinate dehydratase, found in Dehalococcoides mccartyi (strain ATCC BAA-2100 / JCM 16839 / KCTC 5957 / BAV1).